The chain runs to 380 residues: Omega-3 fatty acid desaturase, endoplasmic reticulum (380 aa).

Residues 59–78 traverse the membrane as a helical segment; sequence VLVVTALAASAISFNSWFFW. The Histidine box-1 motif lies at 97-101; it reads HDCGH. Positions 133–137 match the Histidine box-2 motif; that stretch reads HRTHH. Helical transmembrane passes span 208–231 and 238–256; these read GVVTSTLCWGIVLSVLLYLSLTIG and LYGVPYLIFVMWLDFVTYL. Residues 300–304 carry the Histidine box-3 motif; the sequence is HVIHH.

Belongs to the fatty acid desaturase type 1 family.

Its subcellular location is the endoplasmic reticulum membrane. Its pathway is lipid metabolism; polyunsaturated fatty acid biosynthesis. In terms of biological role, microsomal (ER) omega-3 fatty acid desaturase introduces the third double bond in the biosynthesis of 18:3 fatty acids, important constituents of plant membranes. It is thought to use cytochrome b5 as an electron donor and to act on fatty acids esterified to phosphatidylcholine and, possibly, other phospholipids. The chain is Omega-3 fatty acid desaturase, endoplasmic reticulum (ARG1) from Vigna radiata var. radiata (Mung bean).